Here is a 239-residue protein sequence, read N- to C-terminus: Claudin-14 (239 aa).

Over 1-7 the chain is Cytoplasmic; sequence MASTAVQ. The chain crosses the membrane as a helical span at residues 8–28; sequence LLGFLLSFLGMVGTLITTILP. Over 29–81 the chain is Extracellular; it reads HWRRTAHVGTNILTAVSYLKGLWMECVWHSTGIYQCQIYRSLLALPRDLQAAR. A helical membrane pass occupies residues 82–102; it reads ALMVISCLLSGMACACAVVGM. The Cytoplasmic portion of the chain corresponds to 103-115; it reads KCTRCAKGTPAKT. The helical transmembrane segment at 116 to 136 threads the bilayer; it reads TFAVLGGALFLLAGLLCMVAV. Over 137-162 the chain is Extracellular; sequence SWTTNDVVQNFYNPLLPSGMKFEIGQ. The chain crosses the membrane as a helical span at residues 163-183; sequence ALYLGFISSSLSLIGGTLLCL. Over 184-239 the chain is Cytoplasmic; the sequence is SCQDEAPYRPYPPQSRAGATTTATAPAYRPPAAYKDNRAPSVTSAAHSGYRLNDYV.

This sequence belongs to the claudin family. In terms of tissue distribution, expressed in all sensory epithelia of the inner ear vestibular organs, as well as in liver and kidney.

It localises to the cell junction. The protein localises to the tight junction. It is found in the cell membrane. Functionally, plays a major role in tight junction-specific obliteration of the intercellular space, through calcium-independent cell-adhesion activity. The sequence is that of Claudin-14 (Cldn14) from Mus musculus (Mouse).